Here is a 344-residue protein sequence, read N- to C-terminus: uncharacterized protein (344 aa).

A disordered region spans residues 190-232; that stretch reads SGKRVRSAKKSGADAARASEGATCDRASSESVSPTARPPAQAS.

This is an uncharacterized protein from Treponema pallidum (strain Nichols).